The following is a 411-amino-acid chain: Actin-like protein 9 (411 aa).

Positions 1 to 15 are enriched in basic and acidic residues; that stretch reads MDVNGPKRWEPHRSL. The disordered stretch occupies residues 1–23; that stretch reads MDVNGPKRWEPHRSLDLNPRSTP.

The protein belongs to the actin family. Interacts with ACTL7A.

The protein resides in the cytoplasmic vesicle. It is found in the secretory vesicle. The protein localises to the acrosome. It localises to the cytoplasm. Its subcellular location is the cytoskeleton. The protein resides in the perinuclear theca. In terms of biological role, testis-specic protein that plays an important role in fusion of proacrosomal vesicles and perinuclear theca formation. This chain is Actin-like protein 9 (Actl9), found in Rattus norvegicus (Rat).